The chain runs to 217 residues: Large ribosomal subunit protein uL1 (217 aa).

The protein belongs to the universal ribosomal protein uL1 family.

This chain is Large ribosomal subunit protein uL1 (RPL10A), found in Candida glabrata (strain ATCC 2001 / BCRC 20586 / JCM 3761 / NBRC 0622 / NRRL Y-65 / CBS 138) (Yeast).